Consider the following 384-residue polypeptide: MKAIVIGAGIGGLSAAVALKQSGIDCDVYEAVKEIKPVGAAISVWPNGVKCMAHLGMGDIMETFGGPLRRMAYRDFRSGENMTQFSLAPLIERTGSRPCPVSRAELQREMLDYWGRDSVQFGKRVTRCEEDADGVTVWFTDGSSASGDLLIAADGSHSALRPWVLGFTPQRRYAGYVNWNGLVEIDEALAPGDQWTTFVGEGKRVSLMPVSAGRFYFFFDVPLPAGLAEDRDTLRADLSRYFAGWAPPVQKLIAALDPQTTNRIEIHDIEPFSRLVRGRVALLGDAGHSTTPDIGQGGCAAMEDAVVLGAVFRQTRDIAAALREYEAQRCDRVRDLVLKARKRCDITHGKDMQLTEAWYQELREETGERIINGMCDTILSGPLG.

Residues Gly11, 30–31 (EA), Ser43, and Val125 contribute to the FAD site. Substrate is bound by residues Asn178, Arg204, and 216-218 (YFF). FAD is bound by residues Asp285 and 295-299 (GQGGC).

This sequence belongs to the FAD-dependent urate hydroxylase family. As to quaternary structure, monomer. The cofactor is FAD.

It catalyses the reaction urate + NADH + O2 + H(+) = 5-hydroxyisourate + NAD(+) + H2O. The protein operates within purine metabolism; urate degradation. Catalyzes the hydroxylation of urate to 5-hydroxyisourate (HIU). The polypeptide is FAD-dependent urate hydroxylase (Klebsiella pneumoniae subsp. pneumoniae (strain ATCC 700721 / MGH 78578)).